We begin with the raw amino-acid sequence, 443 residues long: Phosphoglucosamine mutase (443 aa).

The active-site Phosphoserine intermediate is S101. Residues S101, D240, D242, and D244 each contribute to the Mg(2+) site. Position 101 is a phosphoserine (S101).

It belongs to the phosphohexose mutase family. Requires Mg(2+) as cofactor. In terms of processing, activated by phosphorylation.

It catalyses the reaction alpha-D-glucosamine 1-phosphate = D-glucosamine 6-phosphate. Catalyzes the conversion of glucosamine-6-phosphate to glucosamine-1-phosphate. This Psychromonas ingrahamii (strain DSM 17664 / CCUG 51855 / 37) protein is Phosphoglucosamine mutase.